A 473-amino-acid chain; its full sequence is H(+)/Cl(-) exchange transporter ClcA (473 aa).

Residues 1-32 (MKTDTSTFLAQQIVRLRRRDQIRRLMQRDKTP) are Cytoplasmic-facing. The chain crosses the membrane as a helical span at residues 33–69 (LAILFMAAVVGTLTGLVGVAFEKAVSWVQNMRIGALV). Over 70 to 76 (QVADHAF) the chain is Periplasmic. Residues 77–100 (LLWPLAFILSALLAMVGYFLVRKF) traverse the membrane as a helical segment. The short motif at 106 to 110 (GSGIP) is the Selectivity filter part_1 element. S107 serves as a coordination point for chloride. The segment at residues 109–116 (IPEIEGAL) is an intramembrane region (helical). The Cytoplasmic portion of the chain corresponds to 117–123 (EELRPVR). Transmembrane regions (helical) follow at residues 124–141 (WWRV…TLGA) and 148–166 (EGPT…LDVF). The short motif at 146–150 (GREGP) is the Selectivity filter part_2 element. Residues 167-176 (RMRSAEARHT) are Cytoplasmic-facing. 2 intramembrane regions (helical) span residues 177-189 (LLAT…LSAA) and 193-201 (PLAGILFII). Residues 202–214 (EEMRPQFRYNLIS) lie on the Cytoplasmic side of the membrane. A helical transmembrane segment spans residues 215–232 (IKAVFTGVIMSSIVFRIF). At 233–252 (NGEAPIIEVGKLSDAPVNTL) the chain is on the periplasmic side. The helical transmembrane segment at 253–281 (WLYLILGIIFGCVGPVFNSLVLRTQDMFQ) threads the bilayer. The Cytoplasmic portion of the chain corresponds to 282–287 (RFHGGE). A helical membrane pass occupies residues 288 to 309 (IKKWVLMGGAIGGLCGILGLIE). Topologically, residues 310-329 (PEAAGGGFNLIPIAAAGNFS) are periplasmic. The next 2 membrane-spanning stretches (helical) occupy residues 330–349 (VGLL…LCFS) and 355–376 (GIFA…MAAA). The short motif at 355 to 359 (GIFAP) is the Selectivity filter part_3 element. Residues I356 and F357 each contribute to the chloride site. At 377-386 (VLFPQYHLEA) the chain is on the periplasmic side. An intramembrane region (helical) is located at residues 387–401 (GTFAIAGMGALMAAS). The segment at residues 402-404 (VRA) is an intramembrane region (note=Loop between two helices). An intramembrane region (helical) is located at residues 405–416 (PLTGIVLVLEMT). An intramembrane region (note=Loop between two helices) is located at residues 417 to 421 (DNYQL). Residues 422–438 (ILPMIITCLGATLLAQF) form a helical membrane-spanning segment. The Cytoplasmic portion of the chain corresponds to 439–473 (LGGKPLYSTILARTLAKQDAEQAAKSQNAPAGENT). Residue Y445 participates in chloride binding.

The protein belongs to the chloride channel (TC 2.A.49) family. ClcA subfamily. As to quaternary structure, homodimer.

It localises to the cell inner membrane. It catalyses the reaction 2 chloride(in) + H(+)(out) = 2 chloride(out) + H(+)(in). Proton-coupled chloride transporter. Functions as antiport system and exchanges two chloride ions for 1 proton. Probably acts as an electrical shunt for an outwardly-directed proton pump that is linked to amino acid decarboxylation, as part of the extreme acid resistance (XAR) response. The chain is H(+)/Cl(-) exchange transporter ClcA from Salmonella gallinarum (strain 287/91 / NCTC 13346).